The following is a 626-amino-acid chain: Chaperone protein HtpG (626 aa).

Residues 1–341 (MRKKKFKAES…SEDLSLNISR (341 aa)) are a; substrate-binding. The segment at 342–552 (EMLQHDRQLK…DGEVTIEMEK (211 aa)) is b. The tract at residues 553–626 (VLNAMPDSQQ…FTNDICKVMV (74 aa)) is c.

The protein belongs to the heat shock protein 90 family. In terms of assembly, homodimer.

Its subcellular location is the cytoplasm. Molecular chaperone. Has ATPase activity. The sequence is that of Chaperone protein HtpG from Bacillus velezensis (strain DSM 23117 / BGSC 10A6 / LMG 26770 / FZB42) (Bacillus amyloliquefaciens subsp. plantarum).